The primary structure comprises 185 residues: Ribosome-recycling factor (185 aa).

The protein belongs to the RRF family.

It localises to the cytoplasm. Responsible for the release of ribosomes from messenger RNA at the termination of protein biosynthesis. May increase the efficiency of translation by recycling ribosomes from one round of translation to another. The polypeptide is Ribosome-recycling factor (Nitrosomonas europaea (strain ATCC 19718 / CIP 103999 / KCTC 2705 / NBRC 14298)).